We begin with the raw amino-acid sequence, 551 residues long: Probable 4-coumarate--CoA ligase 3 (551 aa).

Positions 205, 206, 207, 208, 209, and 213 each coordinate ATP. F253 lines the (E)-4-coumaroyl-AMP pocket. K274 is a CoA binding site. Residues 276 to 346 (EPVRFLELIK…RFKGRLVIKQ (71 aa)) form an SBD1 region. A323, Q346, G347, and T351 together coordinate (E)-4-coumaroyl-AMP. ATP contacts are provided by Q346, G347, T351, D430, and R445. An SBD2 region spans residues 347 to 409 (GYGATELSPC…IKGPNVMLGY (63 aa)). K447 and K451 together coordinate (E)-4-coumaroyl-AMP. The CoA site is built by K453 and G454. K537 serves as a coordination point for ATP.

It belongs to the ATP-dependent AMP-binding enzyme family. Requires Mg(2+) as cofactor.

The enzyme catalyses (E)-4-coumarate + ATP + CoA = (E)-4-coumaroyl-CoA + AMP + diphosphate. It carries out the reaction (E)-4-coumarate + ATP + H(+) = (E)-4-coumaroyl-AMP + diphosphate. The catalysed reaction is (E)-4-coumaroyl-AMP + CoA = (E)-4-coumaroyl-CoA + AMP + H(+). Its pathway is phytoalexin biosynthesis; 3,4',5-trihydroxystilbene biosynthesis; 3,4',5-trihydroxystilbene from trans-4-coumarate: step 1/2. Carboxylate--CoA ligase that may use 4-coumarate as substrate. Follows a two-step reaction mechanism, wherein the carboxylate substrate first undergoes adenylation by ATP, followed by a thioesterification in the presence of CoA to yield the final CoA thioester. The protein is Probable 4-coumarate--CoA ligase 3 (4cl3) of Dictyostelium discoideum (Social amoeba).